The chain runs to 172 residues: Putative RNA polymerase II transcriptional coactivator (172 aa).

2 disordered regions span residues 1–43 (MPPK…QDGN) and 123–172 (QTDA…DDDE). Over residues 24–43 (GNTGKAQPQELTKGSDQDGN) the composition is skewed to polar residues. Residues 131–144 (PKVKALESNKESIK) are compositionally biased toward basic and acidic residues. A compositionally biased stretch (acidic residues) spans 158-172 (TSDEEEAAEDEDDDE).

This sequence belongs to the transcriptional coactivator PC4 family.

The protein resides in the nucleus. General coactivator that functions cooperatively with TAFs and mediates functional interactions between upstream activators and the general transcriptional machinery. Binds single-stranded DNA. The sequence is that of Putative RNA polymerase II transcriptional coactivator from Neurospora crassa (strain ATCC 24698 / 74-OR23-1A / CBS 708.71 / DSM 1257 / FGSC 987).